The primary structure comprises 535 residues: Reticuline oxidase (535 aa).

A signal peptide spans 1-23; sequence MMCRSLTLRFFLFIVLLQTCVRG. An N-linked (GlcNAc...) asparagine glycan is attached at asparagine 42. The region spanning 71 to 245 is the FAD-binding PCMH-type domain; sequence TVSKPSFIVM…YAWKIKLLPV (175 aa). Positions 108 to 170 form a cross-link, 6-(S-cysteinyl)-8alpha-(pros-histidyl)-FAD (His-Cys); sequence HSYEGLSYTA…DTLGFTAGWC (63 aa). N-linked (GlcNAc...) asparagine glycosylation is present at asparagine 475.

This sequence belongs to the oxygen-dependent FAD-linked oxidoreductase family. The cofactor is FAD. Requires a metal cation as cofactor. Post-translationally, the FAD cofactor is bound via a bicovalent 6-S-cysteinyl, 8alpha-N1-histidyl FAD linkage. As to expression, expressed in roots and stems. Not detected in leaves or reproductive organs. Restricted to the parietal region of sieve elements adjacent or proximal to laticifers.

Its subcellular location is the cytoplasmic vesicle. The catalysed reaction is (S)-reticuline + O2 = (S)-scoulerine + H2O2 + H(+). It participates in alkaloid biosynthesis; (S)-scoulerine biosynthesis; (S)-scoulerine from (S)-reticuline: step 1/1. Its function is as follows. Oxygen-dependent FAD-dependent oxidoreductase essential to the formation of benzophenanthridine alkaloids in the response of plants to pathogenic attack. Catalyzes the stereospecific conversion of the N-methyl moiety of (S)-reticuline into the berberine bridge carbon of (S)-scoulerine. Involved in the biosynthesis of sanguinarine. This Papaver somniferum (Opium poppy) protein is Reticuline oxidase (BBE1).